Consider the following 86-residue polypeptide: Co-chaperonin GroES (86 aa).

Belongs to the GroES chaperonin family. In terms of assembly, heptamer of 7 subunits arranged in a ring. Interacts with the chaperonin GroEL.

The protein localises to the cytoplasm. Together with the chaperonin GroEL, plays an essential role in assisting protein folding. The GroEL-GroES system forms a nano-cage that allows encapsulation of the non-native substrate proteins and provides a physical environment optimized to promote and accelerate protein folding. GroES binds to the apical surface of the GroEL ring, thereby capping the opening of the GroEL channel. This Sulfurovum sp. (strain NBC37-1) protein is Co-chaperonin GroES.